A 296-amino-acid polypeptide reads, in one-letter code: Probable endonuclease 4 (296 aa).

Positions 68, 109, 144, 178, 181, 213, 226, 228, and 258 each coordinate Zn(2+).

Belongs to the AP endonuclease 2 family. The cofactor is Zn(2+).

The enzyme catalyses Endonucleolytic cleavage to 5'-phosphooligonucleotide end-products.. Functionally, endonuclease IV plays a role in DNA repair. It cleaves phosphodiester bonds at apurinic or apyrimidinic (AP) sites, generating a 3'-hydroxyl group and a 5'-terminal sugar phosphate. The protein is Probable endonuclease 4 of Staphylococcus aureus (strain NCTC 8325 / PS 47).